Reading from the N-terminus, the 700-residue chain is Inhibitor of carbonic anhydrase (700 aa).

The N-terminal stretch at methionine 1 to alanine 19 is a signal peptide. Transferrin-like domains follow at residues isoleucine 25–arginine 347 and valine 355–glutamine 685. Disulfide bonds link cysteine 28–cysteine 67, cysteine 38–cysteine 58, cysteine 137–cysteine 213, cysteine 172–cysteine 188, cysteine 175–cysteine 198, cysteine 185–cysteine 196, cysteine 246–cysteine 260, cysteine 358–cysteine 390, cysteine 368–cysteine 381, cysteine 415–cysteine 695, cysteine 438–cysteine 658, cysteine 470–cysteine 545, cysteine 494–cysteine 686, cysteine 504–cysteine 518, cysteine 515–cysteine 528, and cysteine 585–cysteine 599. Asparagine 664 is a glycosylation site (N-linked (GlcNAc...) asparagine).

This sequence belongs to the transferrin family. Monomer. Interacts (via transferrin-like domain 2) with CA2. In terms of processing, N-glycosylated. In terms of tissue distribution, detected in blood plasma, heart, kidney, liver, colon, lung, spleen, pancreas and testis (at protein level).

It is found in the secreted. Its function is as follows. Inhibitor for carbonic anhydrase 2 (CA2). Does not bind iron ions. The chain is Inhibitor of carbonic anhydrase from Mus musculus (Mouse).